The sequence spans 149 residues: Aspartate 1-decarboxylase (149 aa).

Serine 25 functions as the Schiff-base intermediate with substrate; via pyruvic acid in the catalytic mechanism. Position 25 is a pyruvic acid (Ser) (serine 25). Residue threonine 57 coordinates substrate. The active-site Proton donor is the tyrosine 58. Glycine 73–alanine 75 contributes to the substrate binding site. The interval glycine 119–alanine 149 is disordered.

The protein belongs to the PanD family. Heterooctamer of four alpha and four beta subunits. Requires pyruvate as cofactor. Is synthesized initially as an inactive proenzyme, which is activated by self-cleavage at a specific serine bond to produce a beta-subunit with a hydroxyl group at its C-terminus and an alpha-subunit with a pyruvoyl group at its N-terminus.

It localises to the cytoplasm. It catalyses the reaction L-aspartate + H(+) = beta-alanine + CO2. It participates in cofactor biosynthesis; (R)-pantothenate biosynthesis; beta-alanine from L-aspartate: step 1/1. In terms of biological role, catalyzes the pyruvoyl-dependent decarboxylation of aspartate to produce beta-alanine. The sequence is that of Aspartate 1-decarboxylase from Parafrankia sp. (strain EAN1pec).